Reading from the N-terminus, the 146-residue chain is Early E3 16 kDa glycoprotein (146 aa).

N-linked (GlcNAc...) asparagine; by host glycans are attached at residues Asn-51 and Asn-84.

E3 proteins seem to be dispensable for virus growth in tissue culture cells. They are potentially important for virus growth under special conditions; E3 region may help adenoviruses to evade the immune surveillance of the host. This Human adenovirus B serotype 3 (HAdV-3) protein is Early E3 16 kDa glycoprotein.